Here is an 801-residue protein sequence, read N- to C-terminus: Probable phosphoketolase (801 aa).

It belongs to the XFP family. The cofactor is thiamine diphosphate.

The protein is Probable phosphoketolase of Bradyrhizobium diazoefficiens (strain JCM 10833 / BCRC 13528 / IAM 13628 / NBRC 14792 / USDA 110).